We begin with the raw amino-acid sequence, 224 residues long: MTSPANRLQRRLGYQFNSSELMTLSLTHRSANGKHNERLEFLGDSILSFVIADDLYHRFPHVDEGDMSRMRATLVRGKTLAELGREFELGDYLLLGPGELKSGGFRRDSILADCVEAIIGAIYLDSDTEQVRKVILSWYQSRLETIQPGINQKDPKTRLQECLQGRRLALPAYTVTKVHGEAHNQEFTVQCEVTGLDKPVIGKGSSRRKAEQAAAELALKQLES.

Residues 5 to 127 enclose the RNase III domain; that stretch reads ANRLQRRLGY…IIGAIYLDSD (123 aa). Position 40 (Glu40) interacts with Mg(2+). Asp44 is an active-site residue. Positions 113 and 116 each coordinate Mg(2+). Glu116 is a catalytic residue. In terms of domain architecture, DRBM spans 154-224; that stretch reads DPKTRLQECL…AELALKQLES (71 aa).

The protein belongs to the ribonuclease III family. Homodimer. The cofactor is Mg(2+).

It localises to the cytoplasm. It carries out the reaction Endonucleolytic cleavage to 5'-phosphomonoester.. Its function is as follows. Digests double-stranded RNA. Involved in the processing of primary rRNA transcript to yield the immediate precursors to the large and small rRNAs (23S and 16S). Processes some mRNAs, and tRNAs when they are encoded in the rRNA operon. Processes pre-crRNA and tracrRNA of type II CRISPR loci if present in the organism. The sequence is that of Ribonuclease 3 from Photobacterium profundum (strain SS9).